We begin with the raw amino-acid sequence, 188 residues long: Elongation factor P-like protein (188 aa).

This sequence belongs to the elongation factor P family.

In Stenotrophomonas maltophilia (strain K279a), this protein is Elongation factor P-like protein.